Reading from the N-terminus, the 73-residue chain is Cytoplasmic envelopment protein 3 (73 aa).

G2 is lipidated: N-myristoyl glycine; by host.

It belongs to the herpesviridae cytoplasmic envelopment protein 3 family. In terms of assembly, interacts with cytoplasmic envelopment protein 2; this interaction is essential for the proper localization of each protein to the assembly complex and thus for the production of infectious virus. In terms of processing, myristoylation and palmitoylation (probably on one or more of the nearby cysteines at the N-terminus) enable membrane-binding and Golgi apparatus-specific targeting and are essential for efficient packaging. Post-translationally, phosphorylated. Phosphorylation does not seem to be required for recycling to the host Golgi apparatus. Packaging is selective for underphosphorylated forms.

The protein resides in the virion tegument. It is found in the virion membrane. It localises to the host cell membrane. Its subcellular location is the host Golgi apparatus membrane. Functionally, plays an important role in the cytoplasmic envelopment of tegument proteins and capsids during the assembly and egress processes. Also participates in viral entry at the fusion step probably by regulating the core fusion machinery. This is Cytoplasmic envelopment protein 3 (U71) from Homo sapiens (Human).